Reading from the N-terminus, the 300-residue chain is Regulatory protein NocR (300 aa).

The HTH lysR-type domain occupies 1-59 (MIQSRQLEAFRAVMLTGGMTSAANLVRITQPAISRLIRDLEEEIGISLFERTGNRLRPT). The H-T-H motif DNA-binding region spans 19–38 (MTSAANLVRITQPAISRLIR).

The protein belongs to the LysR transcriptional regulatory family.

Positive regulatory protein for the noc operon involved in nopaline catabolism and uptake. The protein is Regulatory protein NocR (nocR) of Agrobacterium fabrum (strain C58 / ATCC 33970) (Agrobacterium tumefaciens (strain C58)).